The primary structure comprises 243 residues: Ribonuclease 3 (243 aa).

Residues 10–146 (VNRFRKRFDT…FIGALYLDQG (137 aa)) form the RNase III domain. Residue Glu59 participates in Mg(2+) binding. Asp63 is a catalytic residue. The Mg(2+) site is built by Asp132 and Glu135. Glu135 is an active-site residue. The 70-residue stretch at 172–241 (DFKTQFQEYV…AESAYKQLKQ (70 aa)) folds into the DRBM domain. Positions 219–231 (GKGKTKKESEQRA) are enriched in basic and acidic residues. Positions 219-243 (GKGKTKKESEQRAAESAYKQLKQIK) are disordered.

This sequence belongs to the ribonuclease III family. Homodimer. Mg(2+) serves as cofactor.

It localises to the cytoplasm. The catalysed reaction is Endonucleolytic cleavage to 5'-phosphomonoester.. Digests double-stranded RNA. Involved in the processing of primary rRNA transcript to yield the immediate precursors to the large and small rRNAs (23S and 16S). Processes some mRNAs, and tRNAs when they are encoded in the rRNA operon. Processes pre-crRNA and tracrRNA of type II CRISPR loci if present in the organism. The chain is Ribonuclease 3 from Staphylococcus aureus (strain USA300).